A 260-amino-acid chain; its full sequence is Proteasome subunit alpha (260 aa).

A compositionally biased stretch (low complexity) spans 237–248 (ASTDAPAAAADS). Residues 237–260 (ASTDAPAAAADSADVEERPDSEAP) are disordered. The span at 251-260 (VEERPDSEAP) shows a compositional bias: basic and acidic residues.

The protein belongs to the peptidase T1A family. The 20S proteasome core is composed of 14 alpha and 14 beta subunits that assemble into four stacked heptameric rings, resulting in a barrel-shaped structure. The two inner rings, each composed of seven catalytic beta subunits, are sandwiched by two outer rings, each composed of seven alpha subunits. The catalytic chamber with the active sites is on the inside of the barrel. Has a gated structure, the ends of the cylinder being occluded by the N-termini of the alpha-subunits. Is capped by the proteasome-associated ATPase, ARC.

Its subcellular location is the cytoplasm. The protein operates within protein degradation; proteasomal Pup-dependent pathway. The formation of the proteasomal ATPase ARC-20S proteasome complex, likely via the docking of the C-termini of ARC into the intersubunit pockets in the alpha-rings, may trigger opening of the gate for substrate entry. Interconversion between the open-gate and close-gate conformations leads to a dynamic regulation of the 20S proteasome proteolysis activity. Its function is as follows. Component of the proteasome core, a large protease complex with broad specificity involved in protein degradation. This is Proteasome subunit alpha from Salinispora tropica (strain ATCC BAA-916 / DSM 44818 / JCM 13857 / NBRC 105044 / CNB-440).